The chain runs to 512 residues: Nephrocan (512 aa).

A signal peptide spans 1–19 (MHPLWAFLLGLSLTNGLSA). One can recognise an LRRNT domain in the interval 20–44 (NCPGRCSCDSMQSVQCYRLMELPSG). LRR repeat units follow at residues 45-69 (IPSTTKRLYISHSRIQHLQLSNFTG), 71-93 (LALEDFILLASGTESIENDTFKT), 94-117 (LSTLKTLELWKNKLRQVPSALPAN), 119-138 (EVLKLNDNAICALRGSEFEG), 139-162 (LKNLKVLELKNNLISSLSPSMLSP), 164-185 (ASLQSLMVDGNNIESVVGPLSL), 186-208 (PHLKYMSMENNQLHLIPGNVFTS), 210-232 (QNLQFLSFSGNFLTKIPINLPKS), 234-253 (LSLKMERNQLKVVRFRDMKH), 254-276 (LENLSHLYLSENFLSSIDGAQQL), 277-299 (TNLTTLEVSQNQLQMLPPRLPSR), 301-320 (QKLDCSSNFIQRVTAPEFQD), 321-344 (LRDLKHLFLDNNVVSLFEAGALQR), 346-371 (SQLSNLALEQNLLLSIPLRLPKTLAR), 373-389 (DLKGNAIQDMAERELRD), 390-413 (LKQLQVLNLRNNRISALDFKALEG), and 415-442 (PRLRHLYLDGNPWNCTCSLLRAREVLKA). N-linked (GlcNAc...) asparagine glycosylation is present at asparagine 66. The segment covering 474–484 (EHHLQQSEKSK) has biased composition (basic and acidic residues). The segment at 474-512 (EHHLQQSEKSKETKKKPKPEDSSSIRLNMDDDDDDYEID) is disordered. Residues 503-512 (DDDDDDYEID) are compositionally biased toward acidic residues.

It belongs to the small leucine-rich proteoglycan (SLRP) family. N-glycosylated. In terms of tissue distribution, expressed at highest levels in the kidney, where it is primarily detected in the epithelial cells of distal tubules and collecting ducts, and more weakly in proximal epithelial cells. Expressed at lower levels in heart and lung (at protein level). Detected in skeletal muscle.

The protein localises to the secreted. Its function is as follows. May inhibit TGF-beta signaling. This Mus musculus (Mouse) protein is Nephrocan.